Here is a 230-residue protein sequence, read N- to C-terminus: Ropporin-1-like protein (230 aa).

The RIIa domain maps to 17–54 (PELPDILKQFTKAAIRTQPADVLQWSAGYFSALSRGDP).

It belongs to the ropporin family. As to quaternary structure, component of the axonemal radial spoke complex 1 (RS1), at least composed of spoke head proteins RSPH1, RSPH3, RSPH9 and the cilia-specific component RSPH4A or sperm-specific component RSPH6A, spoke stalk proteins RSPH14, DNAJB13, DYDC1, ROPN1L and NME5, and the anchor protein IQUB. May interact with AKAP3. Interacts with FSCB; the interaction increases upon spermatozoa capacitation conditions. Interacts with CFAP61. In terms of processing, sumoylated, sumoylation decreases upon spermatozoa capacitation conditions.

Its subcellular location is the cell projection. It localises to the cilium. The protein resides in the flagellum. Functionally, functions as part of axonemal radial spoke complexes that play an important part in the motility of sperm and cilia. Important for male fertility. With ROPN1, involved in fibrous sheath integrity and sperm motility, plays a role in PKA-dependent signaling processes required for spermatozoa capacitation. The sequence is that of Ropporin-1-like protein (ROPN1L) from Macaca fascicularis (Crab-eating macaque).